A 445-amino-acid chain; its full sequence is Mitochondrial enolase superfamily member 1 (445 aa).

Substrate-binding positions include 24 to 26 (GSD), tyrosine 34, and lysine 220. Residue lysine 222 is the Proton donor/acceptor of the active site. Aspartate 250 contacts Mg(2+). Substrate is bound by residues asparagine 252, glutamate 276, glutamate 305, 355 to 357 (HAG), and glutamate 386. 2 residues coordinate Mg(2+): glutamate 276 and glutamate 305. The active site involves histidine 355.

This sequence belongs to the mandelate racemase/muconate lactonizing enzyme family. ENOSF1 subfamily. It depends on Mg(2+) as a cofactor.

Its subcellular location is the mitochondrion. The catalysed reaction is L-fuconate = 2-dehydro-3-deoxy-L-fuconate + H2O. Plays a role in the catabolism of L-fucose, a sugar that is part of the carbohydrates that are attached to cellular glycoproteins. Catalyzes the dehydration of L-fuconate to 2-keto-3-deoxy-L-fuconate by the abstraction of the 2-proton to generate an enediolate intermediate that is stabilized by the magnesium ion. May down-regulate thymidylate synthase activity, possibly already at the RNA level, by promoting the degradation of TYMS mRNA via an antisense RNA-based mechanism. The polypeptide is Mitochondrial enolase superfamily member 1 (enosf1) (Xenopus laevis (African clawed frog)).